The chain runs to 190 residues: Potassium-transporting ATPase KdpC subunit (190 aa).

The helical transmembrane segment at proline 7 to valine 27 threads the bilayer.

Belongs to the KdpC family. In terms of assembly, the system is composed of three essential subunits: KdpA, KdpB and KdpC.

The protein localises to the cell inner membrane. Functionally, part of the high-affinity ATP-driven potassium transport (or Kdp) system, which catalyzes the hydrolysis of ATP coupled with the electrogenic transport of potassium into the cytoplasm. This subunit acts as a catalytic chaperone that increases the ATP-binding affinity of the ATP-hydrolyzing subunit KdpB by the formation of a transient KdpB/KdpC/ATP ternary complex. The polypeptide is Potassium-transporting ATPase KdpC subunit (Methylococcus capsulatus (strain ATCC 33009 / NCIMB 11132 / Bath)).